We begin with the raw amino-acid sequence, 608 residues long: V-type ATP synthase subunit I (608 aa).

9 helical membrane passes run 308-325 (ISFI…MIIG), 327-346 (AAYG…SFLL), 356-376 (GLIF…GTWF), 405-425 (IIFI…VWNF), 438-458 (IAQI…LNLI), 464-484 (FPMY…VFVF), 495-515 (CILK…SGFA), 517-537 (IISY…SASF), and 550-570 (IGLI…NIML).

The protein belongs to the V-ATPase 116 kDa subunit family.

The protein resides in the cell membrane. Its function is as follows. Produces ATP from ADP in the presence of a proton gradient across the membrane. This Borreliella burgdorferi (strain ATCC 35210 / DSM 4680 / CIP 102532 / B31) (Borrelia burgdorferi) protein is V-type ATP synthase subunit I (atpI).